An 88-amino-acid polypeptide reads, in one-letter code: Small ribosomal subunit protein bS20 (88 aa).

Positions 1–21 (MANSKSAKKRALQSEKRRQHN) are enriched in basic residues. The disordered stretch occupies residues 1 to 26 (MANSKSAKKRALQSEKRRQHNASRSS).

Belongs to the bacterial ribosomal protein bS20 family.

Binds directly to 16S ribosomal RNA. The sequence is that of Small ribosomal subunit protein bS20 from Shewanella halifaxensis (strain HAW-EB4).